The sequence spans 1252 residues: Guanine nucleotide exchange factor SDC25 (1252 aa).

An SH3 domain is found at 26–97 (QPIDVVECTY…PPSFTRSILN (72 aa)). 2 disordered regions span residues 409 to 454 (IPAS…DTIW) and 623 to 648 (LNLD…DEYE). Low complexity predominate over residues 416 to 428 (TSCSSETSHHSPS). An N-terminal Ras-GEF domain is found at 782–914 (SNNRIKGGSK…LLKEVNQKFK (133 aa)). Residues 952–1199 (DPVLFATQLT…YQLSLIIEPK (248 aa)) form the Ras-GEF domain. A disordered region spans residues 1201–1252 (RKKVVPNSNSNNKSQEKSRDDQTDEGKTSTKKDRFSKFQLHKTKKKAPKVSK). A compositionally biased stretch (basic and acidic residues) spans 1214-1236 (SQEKSRDDQTDEGKTSTKKDRFS). Residues 1239-1252 (QLHKTKKKAPKVSK) show a composition bias toward basic residues.

In terms of biological role, promotes the exchange of Ras-bound GDP by GTP. The polypeptide is Guanine nucleotide exchange factor SDC25 (SDC25) (Saccharomyces cerevisiae (strain RM11-1a) (Baker's yeast)).